The sequence spans 320 residues: ATP-dependent 6-phosphofructokinase (320 aa).

Position 12 (Gly-12) interacts with ATP. 22–26 (RGVVR) contributes to the ADP binding site. ATP-binding positions include 73 to 74 (RF) and 103 to 106 (GDGS). Asp-104 is a binding site for Mg(2+). Substrate is bound at residue 126 to 128 (TID). Residue Asp-128 is the Proton acceptor of the active site. Arg-155 is an ADP binding site. Residues Arg-163 and 170 to 172 (MGR) each bind substrate. ADP contacts are provided by residues 186–188 (GCE), Lys-212, and 214–216 (KKH). Substrate is bound by residues Glu-223, Arg-244, and 250-253 (HIQR).

Belongs to the phosphofructokinase type A (PFKA) family. ATP-dependent PFK group I subfamily. Prokaryotic clade 'B1' sub-subfamily. As to quaternary structure, homotetramer. The cofactor is Mg(2+).

The protein resides in the cytoplasm. It catalyses the reaction beta-D-fructose 6-phosphate + ATP = beta-D-fructose 1,6-bisphosphate + ADP + H(+). The protein operates within carbohydrate degradation; glycolysis; D-glyceraldehyde 3-phosphate and glycerone phosphate from D-glucose: step 3/4. With respect to regulation, allosterically activated by ADP and other diphosphonucleosides, and allosterically inhibited by phosphoenolpyruvate. Functionally, catalyzes the phosphorylation of D-fructose 6-phosphate to fructose 1,6-bisphosphate by ATP, the first committing step of glycolysis. This chain is ATP-dependent 6-phosphofructokinase, found in Aliivibrio salmonicida (strain LFI1238) (Vibrio salmonicida (strain LFI1238)).